An 809-amino-acid chain; its full sequence is Leucine--tRNA ligase (809 aa).

The short motif at 40–50 is the 'HIGH' region element; the sequence is PYPSGRIHMGH. The 'KMSKS' region signature appears at 579 to 583; it reads KMSKS. Lys582 is a binding site for ATP.

The protein belongs to the class-I aminoacyl-tRNA synthetase family.

It is found in the cytoplasm. The enzyme catalyses tRNA(Leu) + L-leucine + ATP = L-leucyl-tRNA(Leu) + AMP + diphosphate. The polypeptide is Leucine--tRNA ligase (Campylobacter jejuni (strain RM1221)).